Here is an 840-residue protein sequence, read N- to C-terminus: Protein translocase subunit SecA (840 aa).

ATP-binding positions include Gln-85, 103–107, and Asp-492; that span reads GEGKT. Positions 787–821 are disordered; that stretch reads QRERVAKETGASHGGDSQEIKKKPVKKEPKVGRND. Basic and acidic residues predominate over residues 802–819; it reads DSQEIKKKPVKKEPKVGR. Positions 823, 825, 834, and 835 each coordinate Zn(2+).

Belongs to the SecA family. In terms of assembly, monomer and homodimer. Part of the essential Sec protein translocation apparatus which comprises SecA, SecYEG and auxiliary proteins SecDF. Other proteins may also be involved. It depends on Zn(2+) as a cofactor.

The protein localises to the cell membrane. Its subcellular location is the cytoplasm. The enzyme catalyses ATP + H2O + cellular proteinSide 1 = ADP + phosphate + cellular proteinSide 2.. Part of the Sec protein translocase complex. Interacts with the SecYEG preprotein conducting channel. Has a central role in coupling the hydrolysis of ATP to the transfer of proteins into and across the cell membrane, serving as an ATP-driven molecular motor driving the stepwise translocation of polypeptide chains across the membrane. The polypeptide is Protein translocase subunit SecA (Clostridium perfringens (strain 13 / Type A)).